We begin with the raw amino-acid sequence, 296 residues long: Probable AP endonuclease (296 aa).

An intrachain disulfide couples C16 to C20. The Zn(2+) site is built by H78, H115, E142, H182, H218, D231, H233, and E271.

This sequence belongs to the AP endonuclease 2 family. It depends on Zn(2+) as a cofactor.

The protein resides in the host nucleus. It is found in the host cytoplasm. Its subcellular location is the virion. Endonuclease of the viral base excision repair system that catalyzes DNA cleavage reaction at the apurinic or apyrimidinic sites (AP sites). Cleaves phosphodiester bonds on the 5' side of AP sites. In addition to endonuclease activity, the AP endonuclease has a proofreading 3'-5' exonuclease activity that is considerably more efficient in the elimination of a mismatch than in that of a correctly paired base. Displays 3'-phosphatase and 3'-repair diesterase activities. The single nucleotide gaps generated by the AP endonuclease are filled by the viral repair DNA polymerase X and the DNA ligase. This is Probable AP endonuclease from Ornithodoros (relapsing fever ticks).